A 305-amino-acid chain; its full sequence is Cbb3-type cytochrome c oxidase subunit CcoP2 (305 aa).

2 consecutive transmembrane segments (helical) span residues 4 to 24 (FWSW…VWLL) and 57 to 77 (WWFM…VLYP). Cytochrome c domains lie at 130-209 (QALK…RSLS) and 219-300 (VDIE…YSLS). Heme c contacts are provided by C143, C146, H147, M186, C232, C235, H236, and M277.

As to quaternary structure, component of the cbb3-type cytochrome c oxidase at least composed of CcoN, CcoO, CcoQ and CcoP. Heme c serves as cofactor.

The protein resides in the cell inner membrane. It participates in energy metabolism; oxidative phosphorylation. Its function is as follows. C-type cytochrome. Part of the cbb3-type cytochrome c oxidase complex. CcoP subunit is required for transferring electrons from donor cytochrome c via its heme groups to CcoO subunit. From there, electrons are shuttled to the catalytic binuclear center of CcoN subunit where oxygen reduction takes place. The complex also functions as a proton pump. In Stutzerimonas stutzeri (Pseudomonas stutzeri), this protein is Cbb3-type cytochrome c oxidase subunit CcoP2.